The following is a 295-amino-acid chain: Probable phosphoglycerate mutase PMU1 (295 aa).

The active-site Tele-phosphohistidine intermediate is histidine 61. Glutamate 170 acts as the Proton donor/acceptor in catalysis.

It belongs to the phosphoglycerate mutase family.

The protein localises to the cytoplasm. It localises to the nucleus. Functionally, probable phosphomutase that may have a function related to the manipulation of phosphate groups on carbohydrates. Reduces trehalose-6-phosphate levels when overexpressed in TPS2-deleted cells. Reduces 5'-Phosphoribosyl-4-carboxamide-5-aminoimidazole (AICAR) levels, a metabolic intermediate at the crossroads between AMP and histidine biosynthesis pathways, when overexpressed in a ADE3-ADE16-ADE17 triple deletant. The sequence is that of Probable phosphoglycerate mutase PMU1 from Saccharomyces cerevisiae (strain ATCC 204508 / S288c) (Baker's yeast).